The chain runs to 211 residues: Large ribosomal subunit protein uL3 (211 aa).

The residue at position 150 (Gln150) is an N5-methylglutamine.

This sequence belongs to the universal ribosomal protein uL3 family. In terms of assembly, part of the 50S ribosomal subunit. Forms a cluster with proteins L14 and L19. Post-translationally, methylated by PrmB.

In terms of biological role, one of the primary rRNA binding proteins, it binds directly near the 3'-end of the 23S rRNA, where it nucleates assembly of the 50S subunit. This chain is Large ribosomal subunit protein uL3, found in Pseudomonas aeruginosa (strain LESB58).